We begin with the raw amino-acid sequence, 306 residues long: MRKTLTVLGSINADHVISVPYFTKPGETLTGQNYQIAYGGKGANQAVAAARLGAKVAFISCIGSDSIGKTMKNAFAQEGIDTTHINTVSQEMTGMAFIQVAKSSENSIVLASGANSHLSEMVVRQSEAQIAQSDCLLMQLETPLSGVELAAQIAKKNGVKVVLNPAPAQILSDELLSLIDIITPNETEAEILTGVEVADEQSAVKAASVFHDKGIETVMITLGAKGVFVSRKGKSRIIKGFCVQAIDTTAAGDTFNGGFVTALLEEKSFDEAIRFGQAAAAISVTKKGAQSSIPTRQETLEFLEHA.

Substrate contacts are provided by residues 12–14 (NAD), 40–44 (GKGAN), and glutamate 141. ATP contacts are provided by residues asparagine 185 and 221–226 (TLGAKG). Residues aspartate 247 and threonine 249 each coordinate K(+). ATP is bound at residue 252 to 253 (GD). Aspartate 253 contributes to the substrate binding site. Aspartate 253 functions as the Proton acceptor in the catalytic mechanism. Residues serine 283, lysine 286, glycine 288, and serine 292 each contribute to the K(+) site.

Belongs to the carbohydrate kinase PfkB family. Ribokinase subfamily. As to quaternary structure, homodimer. It depends on Mg(2+) as a cofactor.

It localises to the cytoplasm. The enzyme catalyses D-ribose + ATP = D-ribose 5-phosphate + ADP + H(+). The protein operates within carbohydrate metabolism; D-ribose degradation; D-ribose 5-phosphate from beta-D-ribopyranose: step 2/2. Activated by a monovalent cation that binds near, but not in, the active site. The most likely occupant of the site in vivo is potassium. Ion binding induces a conformational change that may alter substrate affinity. In terms of biological role, catalyzes the phosphorylation of ribose at O-5 in a reaction requiring ATP and magnesium. The resulting D-ribose-5-phosphate can then be used either for sythesis of nucleotides, histidine, and tryptophan, or as a component of the pentose phosphate pathway. This chain is Ribokinase, found in Haemophilus influenzae (strain ATCC 51907 / DSM 11121 / KW20 / Rd).